The primary structure comprises 117 residues: NADH dehydrogenase [ubiquinone] 1 beta subcomplex subunit 9 (117 aa).

Ser-2 is subject to N-acetylserine.

The protein belongs to the complex I LYR family. Complex I is composed of at least 49 different subunits. As to expression, expressed in roots, stems, flowers, rosette leaves, cauline leaves and siliques, with the highest expression in the stems.

It is found in the mitochondrion inner membrane. Its function is as follows. Accessory subunit of the mitochondrial membrane respiratory chain NADH dehydrogenase (Complex I), that is believed to be not involved in catalysis. Complex I functions in the transfer of electrons from NADH to the respiratory chain. The immediate electron acceptor for the enzyme is believed to be ubiquinone. Is required for correct plant growth and development. The protein is NADH dehydrogenase [ubiquinone] 1 beta subcomplex subunit 9 (CIB22) of Arabidopsis thaliana (Mouse-ear cress).